Here is a 253-residue protein sequence, read N- to C-terminus: Purine nucleoside phosphorylase DR_1966 (253 aa).

Residues H72, C106, and H123 each coordinate Zn(2+).

The protein belongs to the purine nucleoside phosphorylase YfiH/LACC1 family. Homodimer. The cofactor is Cu(2+). Zn(2+) serves as cofactor.

The catalysed reaction is adenosine + phosphate = alpha-D-ribose 1-phosphate + adenine. The enzyme catalyses S-methyl-5'-thioadenosine + phosphate = 5-(methylsulfanyl)-alpha-D-ribose 1-phosphate + adenine. It carries out the reaction inosine + phosphate = alpha-D-ribose 1-phosphate + hypoxanthine. It catalyses the reaction adenosine + H2O + H(+) = inosine + NH4(+). In terms of biological role, purine nucleoside enzyme that catalyzes the phosphorolysis of adenosine and inosine nucleosides, yielding D-ribose 1-phosphate and the respective free bases, adenine and hypoxanthine. Also catalyzes the phosphorolysis of S-methyl-5'-thioadenosine into adenine and S-methyl-5-thio-alpha-D-ribose 1-phosphate. Also has adenosine deaminase activity. The sequence is that of Purine nucleoside phosphorylase DR_1966 from Deinococcus radiodurans (strain ATCC 13939 / DSM 20539 / JCM 16871 / CCUG 27074 / LMG 4051 / NBRC 15346 / NCIMB 9279 / VKM B-1422 / R1).